Consider the following 202-residue polypeptide: Small ribosomal subunit protein uS2 (202 aa).

This sequence belongs to the universal ribosomal protein uS2 family.

This chain is Small ribosomal subunit protein uS2 (rps2), found in Pyrococcus horikoshii (strain ATCC 700860 / DSM 12428 / JCM 9974 / NBRC 100139 / OT-3).